Consider the following 53-residue polypeptide: MKLIYIFSLVAVIAVTMIPGIMGEAEAEGRPPQIGIFDQIDKGMAAFMDLFKG.

A signal peptide spans 1 to 23 (MKLIYIFSLVAVIAVTMIPGIMG). Positions 24–29 (EAEAEG) are excised as a propeptide. Position 52 is a lysine amide (K52).

Expressed by the venom gland.

It is found in the secreted. Functionally, in vivo, this neurotoxin paralyzes about 70% of blowflies (L.caesar) one hour after intrathoracic injection, when tested at high doses (45 nmol/g). This is U13-myrmicitoxin-Tb1a from Tetramorium bicarinatum (Tramp ant).